The chain runs to 525 residues: Phosphoenolpyruvate carboxykinase (ATP) (525 aa).

Residues Arg-52, Tyr-186, and Lys-192 each coordinate substrate. ATP is bound by residues Lys-192, His-211, and 228–236; that span reads GLSGTGKTT. The Mn(2+) site is built by Lys-192 and His-211. Asp-249 is a binding site for Mn(2+). ATP-binding positions include Glu-277, Arg-314, 433–434, and Thr-439; that span reads RI. Arg-314 is a substrate binding site.

Belongs to the phosphoenolpyruvate carboxykinase (ATP) family. Requires Mn(2+) as cofactor.

It is found in the cytoplasm. It catalyses the reaction oxaloacetate + ATP = phosphoenolpyruvate + ADP + CO2. It participates in carbohydrate biosynthesis; gluconeogenesis. In terms of biological role, involved in the gluconeogenesis. Catalyzes the conversion of oxaloacetate (OAA) to phosphoenolpyruvate (PEP) through direct phosphoryl transfer between the nucleoside triphosphate and OAA. This chain is Phosphoenolpyruvate carboxykinase (ATP), found in Fusobacterium nucleatum subsp. nucleatum (strain ATCC 25586 / DSM 15643 / BCRC 10681 / CIP 101130 / JCM 8532 / KCTC 2640 / LMG 13131 / VPI 4355).